Consider the following 521-residue polypeptide: Cysteine protease atg-4.2 (521 aa).

The span at 90-100 shows a compositional bias: low complexity; that stretch reads MMGSIRPSSSS. The interval 90 to 109 is disordered; that stretch reads MMGSIRPSSSSQDVHSTGEI. The active-site Nucleophile is the C203. Catalysis depends on residues D394 and H396. The segment at 499–521 is disordered; it reads PSYEREVSETEQAQADKHGFEML.

Belongs to the peptidase C54 family.

Its subcellular location is the cytoplasm. The enzyme catalyses [protein]-C-terminal L-amino acid-glycyl-phosphatidylethanolamide + H2O = [protein]-C-terminal L-amino acid-glycine + a 1,2-diacyl-sn-glycero-3-phosphoethanolamine. Functionally, cysteine protease required for autophagy. Cleaves the C-terminal amino acid of ATG8 family proteins lgg-1, to reveal a C-terminal glycine. Exposure of the glycine at the C-terminus is essential for ATG8 proteins conjugation to phosphatidylethanolamine (PE) and insertion to membranes, which is necessary for autophagy. Its cleavage activity is functionally redundant to atg-4.1, but it cleaves lgg-1 precursors less efficiently than atg-4.1. In contrast to atg-4.1, plays a more significant role in the later phases of autophagy and in addition has a role in autophagosome maturation. Acts redundantly with atg-4.1 to promote the lgg-1 delipidation to release the protein from membranes, which facilitates multiple events during macroautophagy. Regulates the accumulation of autophagic structures in neurons and is specifically, required for the maturation and elimination of autophagosomes from the synaptic region of AIY interneurons. In Caenorhabditis elegans, this protein is Cysteine protease atg-4.2.